Consider the following 204-residue polypeptide: Histone chaperone ASF1A (204 aa).

The interval 1 to 156 (MAKVQVNNVV…TRFHINWEDN (156 aa)) is interaction with histone H3, CHAF1B, and HIRA. The Required for interaction with HIRA motif lies at 31–37 (IEDLSED). The segment at 155 to 204 (DNTEKLEDAESSNPNLQSLLSTDALPSASKGWSTSENSLNVMLESHMDCM) is required for interaction with HIRA. The residue at position 192 (serine 192) is a Phosphoserine.

Belongs to the ASF1 family. Interacts with histone H3 (via C-terminus), including histone H3.1, H3.2 and H3.3, and histone H4; the interaction with H3 is direct. Probably interacts with the heterodimeric form of H3-H4 taking the place of the second dimer. Interacts with the CHAF1A, CHAF1B and RBBP4 subunits of the CAF-1 complex. Interacts with CABIN1, HAT1, HIRA, NASP, TAF1 and UBN1. Found in a soluble complex with NASP and histones H3 and H4; the interaction with NASP is probably indirect and mediated by H3-H4. Interacts with CDAN1. Found in a cytosolic complex with IPO4 and histones H3 and H4. Interacts with CREBBP. In terms of processing, phosphorylated by TLK1 and TLK2. Highly phosphorylated in S-phase and at lower levels in M-phase. TLK2-mediated phosphorylation at Ser-192 prevents proteasome-dependent degradation. Phosphorylation at Ser-192 by PRKDC in response to DNA damage promotes the histone chaperone activity and ability to replace histones at double-strand breaks (DSBs) at stalled or collapsed replication forks, leading to RAD51 recruitment.

Its subcellular location is the nucleus. The protein resides in the chromosome. Functionally, histone chaperone that facilitates histone deposition and histone exchange and removal during nucleosome assembly and disassembly. Cooperates with chromatin assembly factor 1 (CAF-1) to promote replication-dependent chromatin assembly and with HIRA to promote replication-independent chromatin assembly. Promotes homologous recombination-mediated repair of double-strand breaks (DSBs) at stalled or collapsed replication forks: acts by mediating histone replacement at DSBs, leading to recruitment of the MMS22L-TONSL complex and subsequent loading of RAD51. Also involved in the nuclear import of the histone H3-H4 dimer together with importin-4 (IPO4): specifically recognizes and binds newly synthesized histones with the monomethylation of H3 'Lys-9' and acetylation at 'Lys-14' (H3K9me1K14ac) marks, and diacetylation at 'Lys-5' and 'Lys-12' of H4 (H4K5K12ac) marks in the cytosol. Required for the formation of senescence-associated heterochromatin foci (SAHF) and efficient senescence-associated cell cycle exit. The sequence is that of Histone chaperone ASF1A from Mus musculus (Mouse).